We begin with the raw amino-acid sequence, 221 residues long: Iron-sulfur cluster repair protein YtfE (221 aa).

It belongs to the RIC family. YtfE subfamily. In terms of assembly, homodimer.

It is found in the cytoplasm. Its function is as follows. Di-iron-containing protein involved in the repair of iron-sulfur clusters damaged by oxidative and nitrosative stress conditions. The sequence is that of Iron-sulfur cluster repair protein YtfE from Edwardsiella ictaluri (strain 93-146).